Consider the following 285-residue polypeptide: Protoheme IX farnesyltransferase (285 aa).

9 helical membrane passes run 13-33, 40-60, 89-109, 110-130, 137-157, 165-185, 194-214, 230-252, and 265-285; these read LGKL…AFLA, LLPI…AMII, EAII…FIDN, ILTA…YTIL, LNIV…YTSL, GFLL…SLAL, AHYP…AIAI, INLI…SYRL, and FIFS…VKLI.

It belongs to the UbiA prenyltransferase family. Protoheme IX farnesyltransferase subfamily.

It is found in the cell membrane. The enzyme catalyses heme b + (2E,6E)-farnesyl diphosphate + H2O = Fe(II)-heme o + diphosphate. Its pathway is porphyrin-containing compound metabolism; heme O biosynthesis; heme O from protoheme: step 1/1. Its function is as follows. Converts heme B (protoheme IX) to heme O by substitution of the vinyl group on carbon 2 of heme B porphyrin ring with a hydroxyethyl farnesyl side group. This chain is Protoheme IX farnesyltransferase, found in Saccharolobus islandicus (strain Y.N.15.51 / Yellowstone #2) (Sulfolobus islandicus).